Here is a 457-residue protein sequence, read N- to C-terminus: Tubulin beta chain (457 aa).

GTP is bound by residues glutamine 11, glutamate 69, serine 138, glycine 142, threonine 143, glycine 144, asparagine 204, and asparagine 226. Mg(2+) is bound at residue glutamate 69. The segment at 431-457 (EGEEEEDAYAEGAVVNGDQSYEDQYAA) is disordered.

It belongs to the tubulin family. As to quaternary structure, dimer of alpha and beta chains. A typical microtubule is a hollow water-filled tube with an outer diameter of 25 nm and an inner diameter of 15 nM. Alpha-beta heterodimers associate head-to-tail to form protofilaments running lengthwise along the microtubule wall with the beta-tubulin subunit facing the microtubule plus end conferring a structural polarity. Microtubules usually have 13 protofilaments but different protofilament numbers can be found in some organisms and specialized cells. Mg(2+) serves as cofactor.

It localises to the cytoplasm. The protein localises to the cytoskeleton. Functionally, tubulin is the major constituent of microtubules, a cylinder consisting of laterally associated linear protofilaments composed of alpha- and beta-tubulin heterodimers. Microtubules grow by the addition of GTP-tubulin dimers to the microtubule end, where a stabilizing cap forms. Below the cap, tubulin dimers are in GDP-bound state, owing to GTPase activity of alpha-tubulin. In Porphyra purpurea (Red seaweed), this protein is Tubulin beta chain (TUBB1).